Consider the following 172-residue polypeptide: Shikimate kinase (172 aa).

11–16 (GCGKST) provides a ligand contact to ATP. Residue Ser15 participates in Mg(2+) binding. Residues Asp33, Arg57, and Gly80 each contribute to the substrate site. Arg120 contributes to the ATP binding site. Position 142 (Arg142) interacts with substrate. Residue Arg158 participates in ATP binding.

Belongs to the shikimate kinase family. As to quaternary structure, monomer. It depends on Mg(2+) as a cofactor.

It localises to the cytoplasm. The catalysed reaction is shikimate + ATP = 3-phosphoshikimate + ADP + H(+). It functions in the pathway metabolic intermediate biosynthesis; chorismate biosynthesis; chorismate from D-erythrose 4-phosphate and phosphoenolpyruvate: step 5/7. Its function is as follows. Catalyzes the specific phosphorylation of the 3-hydroxyl group of shikimic acid using ATP as a cosubstrate. In Flavobacterium johnsoniae (strain ATCC 17061 / DSM 2064 / JCM 8514 / BCRC 14874 / CCUG 350202 / NBRC 14942 / NCIMB 11054 / UW101) (Cytophaga johnsonae), this protein is Shikimate kinase.